Here is a 407-residue protein sequence, read N- to C-terminus: Probable tRNA sulfurtransferase (407 aa).

The THUMP domain occupies 61–165; sequence NEITNRLSKI…LDAIYMYEEV (105 aa). Residues 183 to 184, 208 to 209, arginine 265, glycine 287, and glutamine 296 each bind ATP; these read ML and HF.

This sequence belongs to the ThiI family.

The protein localises to the cytoplasm. The catalysed reaction is [ThiI sulfur-carrier protein]-S-sulfanyl-L-cysteine + a uridine in tRNA + 2 reduced [2Fe-2S]-[ferredoxin] + ATP + H(+) = [ThiI sulfur-carrier protein]-L-cysteine + a 4-thiouridine in tRNA + 2 oxidized [2Fe-2S]-[ferredoxin] + AMP + diphosphate. The enzyme catalyses [ThiS sulfur-carrier protein]-C-terminal Gly-Gly-AMP + S-sulfanyl-L-cysteinyl-[cysteine desulfurase] + AH2 = [ThiS sulfur-carrier protein]-C-terminal-Gly-aminoethanethioate + L-cysteinyl-[cysteine desulfurase] + A + AMP + 2 H(+). It participates in cofactor biosynthesis; thiamine diphosphate biosynthesis. Its function is as follows. Catalyzes the ATP-dependent transfer of a sulfur to tRNA to produce 4-thiouridine in position 8 of tRNAs, which functions as a near-UV photosensor. Also catalyzes the transfer of sulfur to the sulfur carrier protein ThiS, forming ThiS-thiocarboxylate. This is a step in the synthesis of thiazole, in the thiamine biosynthesis pathway. The sulfur is donated as persulfide by IscS. This Staphylococcus aureus (strain MRSA252) protein is Probable tRNA sulfurtransferase.